Consider the following 224-residue polypeptide: Protein GrpE (224 aa).

The disordered stretch occupies residues 27 to 77; that stretch reads NQASEDIDQENQSEVVDDTTENEDASEEVYEEDTASEDGSKEKKSFFKKKE. Over residues 31–62 the composition is skewed to acidic residues; it reads EDIDQENQSEVVDDTTENEDASEEVYEEDTAS.

Belongs to the GrpE family. Homodimer.

It is found in the cytoplasm. Participates actively in the response to hyperosmotic and heat shock by preventing the aggregation of stress-denatured proteins, in association with DnaK and GrpE. It is the nucleotide exchange factor for DnaK and may function as a thermosensor. Unfolded proteins bind initially to DnaJ; upon interaction with the DnaJ-bound protein, DnaK hydrolyzes its bound ATP, resulting in the formation of a stable complex. GrpE releases ADP from DnaK; ATP binding to DnaK triggers the release of the substrate protein, thus completing the reaction cycle. Several rounds of ATP-dependent interactions between DnaJ, DnaK and GrpE are required for fully efficient folding. This is Protein GrpE from Lachnoclostridium phytofermentans (strain ATCC 700394 / DSM 18823 / ISDg) (Clostridium phytofermentans).